A 181-amino-acid polypeptide reads, in one-letter code: uncharacterized protein (181 aa).

Transmembrane regions (helical) follow at residues 3–23 (LSQT…VLIL), 67–87 (ALLL…GLSV), 92–112 (VLGV…VLFI), and 159–179 (MFIL…LWII).

It belongs to the YggT family.

The protein localises to the cell membrane. This is an uncharacterized protein from Haemophilus influenzae (strain ATCC 51907 / DSM 11121 / KW20 / Rd).